A 282-amino-acid chain; its full sequence is Bis(5'-nucleosyl)-tetraphosphatase, symmetrical (282 aa).

It belongs to the Ap4A hydrolase family.

It carries out the reaction P(1),P(4)-bis(5'-adenosyl) tetraphosphate + H2O = 2 ADP + 2 H(+). Hydrolyzes diadenosine 5',5'''-P1,P4-tetraphosphate to yield ADP. The polypeptide is Bis(5'-nucleosyl)-tetraphosphatase, symmetrical (Escherichia coli O45:K1 (strain S88 / ExPEC)).